Here is a 232-residue protein sequence, read N- to C-terminus: MFSNAFTDKTVMAELVAKMLWEIKAVHFRADEPYKLSSGMASPVYIDCRKLISYPRIRSAVMDFAAATILRDAGFEQFDVVAGGETAGIPFAAMLAERLGLPMIYVRKAPKGHGRNAQIEGHMPEGARVLVIEDLTTAGGSMFKFIDAIRAAGGIVEHGIALFYYDIFPEARGNMKSKGVDLHYIATWRNVLAVAREQALFDEKTLNEVEAFLNAPLAWSERNGGVGTLAAQ.

Residues arginine 107, lysine 108, lysine 111, histidine 113, and 133–141 (EDLTTAGGS) each bind 5-phospho-alpha-D-ribose 1-diphosphate. Residue threonine 137 participates in orotate binding.

It belongs to the purine/pyrimidine phosphoribosyltransferase family. PyrE subfamily. As to quaternary structure, homodimer. Requires Mg(2+) as cofactor.

The catalysed reaction is orotidine 5'-phosphate + diphosphate = orotate + 5-phospho-alpha-D-ribose 1-diphosphate. It functions in the pathway pyrimidine metabolism; UMP biosynthesis via de novo pathway; UMP from orotate: step 1/2. Catalyzes the transfer of a ribosyl phosphate group from 5-phosphoribose 1-diphosphate to orotate, leading to the formation of orotidine monophosphate (OMP). The polypeptide is Orotate phosphoribosyltransferase (Sinorhizobium fredii (strain NBRC 101917 / NGR234)).